Consider the following 226-residue polypeptide: Lipoprotein-releasing system ATP-binding protein LolD (226 aa).

Positions 5-226 (LKATNINKIY…LLRNGHWENY (222 aa)) constitute an ABC transporter domain. Residue 41-48 (GTSGSGKS) coordinates ATP.

The protein belongs to the ABC transporter superfamily. Lipoprotein translocase (TC 3.A.1.125) family. As to quaternary structure, the complex is composed of two ATP-binding proteins (LolD) and two transmembrane proteins (LolC and LolE).

It is found in the cell inner membrane. Part of the ABC transporter complex LolCDE involved in the translocation of mature outer membrane-directed lipoproteins, from the inner membrane to the periplasmic chaperone, LolA. Responsible for the formation of the LolA-lipoprotein complex in an ATP-dependent manner. This chain is Lipoprotein-releasing system ATP-binding protein LolD, found in Psychrobacter arcticus (strain DSM 17307 / VKM B-2377 / 273-4).